We begin with the raw amino-acid sequence, 278 residues long: Large ribosomal subunit protein uL2 (278 aa).

2 stretches are compositionally biased toward basic residues: residues 210 to 219 (RKRWLGKRPQ) and 252 to 263 (KKSRGIKTRNSK). The interval 210–278 (RKRWLGKRPQ…LIIRHRKGNK (69 aa)) is disordered.

The protein belongs to the universal ribosomal protein uL2 family. Part of the 50S ribosomal subunit. Forms a bridge to the 30S subunit in the 70S ribosome.

Functionally, one of the primary rRNA binding proteins. Required for association of the 30S and 50S subunits to form the 70S ribosome, for tRNA binding and peptide bond formation. It has been suggested to have peptidyltransferase activity; this is somewhat controversial. Makes several contacts with the 16S rRNA in the 70S ribosome. In Lactobacillus gasseri (strain ATCC 33323 / DSM 20243 / BCRC 14619 / CIP 102991 / JCM 1131 / KCTC 3163 / NCIMB 11718 / NCTC 13722 / AM63), this protein is Large ribosomal subunit protein uL2.